The primary structure comprises 361 residues: Outer membrane protein P2 (361 aa).

The first 20 residues, 1–20 (MKKTLAALIVGAFAASAANA), serve as a signal peptide directing secretion.

This sequence belongs to the Gram-negative porin family. In terms of assembly, homotrimer.

It is found in the cell outer membrane. Forms pores that allow passive diffusion of small molecules across the outer membrane. This Haemophilus influenzae protein is Outer membrane protein P2 (ompP2).